Here is a 179-residue protein sequence, read N- to C-terminus: Natural killer cells antigen CD94 (179 aa).

Residues 1 to 10 are Cytoplasmic-facing; it reads MAVFKTTLWW. A helical; Signal-anchor for type II membrane protein membrane pass occupies residues 11 to 31; sequence LISGTLGIICLSLTATLGILL. Residues 32-179 lie on the Extracellular side of the membrane; that stretch reads KNSFTKLSIE…NRYICKQQLI (148 aa). 2 cysteine pairs are disulfide-bonded: Cys58–Cys70 and Cys61–Cys72. Residues 68–175 form the C-type lectin domain; sequence YRCNCYFISS…CEDKNRYICK (108 aa). 2 N-linked (GlcNAc...) asparagine glycosylation sites follow: Asn83 and Asn132. Disulfide bonds link Cys89-Cys174 and Cys152-Cys166.

In terms of assembly, can form disulfide-bonded heterodimer with NKG2 family members KLRC1 and KLRC2. KLRD1-KLRC1 heterodimer interacts with peptide-bound MHC-E-B2M heterotrimeric complex. KLRD1 plays a prominent role in directly interacting with MHC-E. KLRD1-KLRC1 interacts with much higher affinity with peptide-bound MHC-E-B2M than KLRD1-KLRC2. Interacts with the adapter protein TYROBP/DAP12; this interaction is required for cell surface expression and cell activation. Natural killer cells.

The protein resides in the cell membrane. Its function is as follows. Immune receptor involved in self-nonself discrimination. In complex with KLRC1 or KLRC2 on cytotoxic and regulatory lymphocyte subsets, recognizes non-classical major histocompatibility (MHC) class Ib molecule MHC-E loaded with self-peptides derived from the signal sequence of classical MHC class Ia and non-classical MHC class Ib molecules. Enables cytotoxic cells to monitor the expression of MHC class I molecules in healthy cells and to tolerate self. Primarily functions as a ligand binding subunit as it lacks the capacity to signal. Functionally, KLRD1-KLRC1 acts as an immune inhibitory receptor. Key inhibitory receptor on natural killer (NK) cells that regulates their activation and effector functions. Dominantly counteracts T cell receptor signaling on a subset of memory/effector CD8-positive T cells as part of an antigen-driven response to avoid autoimmunity. On intraepithelial CD8-positive gamma-delta regulatory T cells triggers TGFB1 secretion, which in turn limits the cytotoxic programming of intraepithelial CD8-positive alpha-beta T cells, distinguishing harmless from pathogenic antigens. In MHC-E-rich tumor microenvironment, acts as an immune inhibitory checkpoint and may contribute to progressive loss of effector functions of NK cells and tumor-specific T cells, a state known as cell exhaustion. Upon MHC-E-peptide binding, transmits intracellular signals through KLRC1 immunoreceptor tyrosine-based inhibition motifs (ITIMs) by recruiting INPP5D/SHIP-1 and INPPL1/SHIP-2 tyrosine phosphatases to ITIMs, and ultimately opposing signals transmitted by activating receptors through dephosphorylation of proximal signaling molecules. In terms of biological role, KLRD1-KLRC2 acts as an immune activating receptor. On cytotoxic lymphocyte subsets recognizes MHC-E loaded with signal sequence-derived peptides from non-classical MHC class Ib MHC-G molecules, likely playing a role in the generation and effector functions of adaptive NK cells and in maternal-fetal tolerance during pregnancy. Regulates the effector functions of terminally differentiated cytotoxic lymphocyte subsets, and in particular may play a role in adaptive NK cell response to viral infection. Upon MHC-E-peptide binding, transmits intracellular signals via the adapter protein TYROBP/DAP12, triggering the phosphorylation of proximal signaling molecules and cell activation. The chain is Natural killer cells antigen CD94 (KLRD1) from Pongo pygmaeus (Bornean orangutan).